Consider the following 115-residue polypeptide: UPF0122 protein lp_1634 (115 aa).

It belongs to the UPF0122 family.

Might take part in the signal recognition particle (SRP) pathway. This is inferred from the conservation of its genetic proximity to ftsY/ffh. May be a regulatory protein. The polypeptide is UPF0122 protein lp_1634 (Lactiplantibacillus plantarum (strain ATCC BAA-793 / NCIMB 8826 / WCFS1) (Lactobacillus plantarum)).